The primary structure comprises 203 residues: NAD(P)H dehydrogenase (quinone) (203 aa).

A Flavodoxin-like domain is found at 3–194 (VLIVYYSMYG…AGARFQGRYV (192 aa)). FMN is bound by residues 9–14 (SMYGHI) and 82–84 (TRF). Residue Tyr11 coordinates NAD(+). Trp102 contributes to the substrate binding site. FMN-binding positions include 117 to 123 (SSATQHG) and His138.

This sequence belongs to the WrbA family. The cofactor is FMN.

It carries out the reaction a quinone + NADH + H(+) = a quinol + NAD(+). It catalyses the reaction a quinone + NADPH + H(+) = a quinol + NADP(+). The polypeptide is NAD(P)H dehydrogenase (quinone) (Geobacter sulfurreducens (strain ATCC 51573 / DSM 12127 / PCA)).